The following is a 57-amino-acid chain: Large ribosomal subunit protein bL32 (57 aa).

The tract at residues 1-21 is disordered; sequence MAVQQRRSSKHRRDKRRSHDA. The span at 7–18 shows a compositional bias: basic residues; that stretch reads RSSKHRRDKRRS.

This sequence belongs to the bacterial ribosomal protein bL32 family.

In Mycoplasma pneumoniae (strain ATCC 29342 / M129 / Subtype 1) (Mycoplasmoides pneumoniae), this protein is Large ribosomal subunit protein bL32 (rpmF).